A 389-amino-acid chain; its full sequence is Dual-specificity RNA methyltransferase RlmN (389 aa).

E94 acts as the Proton acceptor in catalysis. One can recognise a Radical SAM core domain in the interval 134-367 (PRVRVTQCIS…CFVRRRRGDD (234 aa)). C141 and C372 form a disulfide bridge. The [4Fe-4S] cluster site is built by C148, C152, and C155. S-adenosyl-L-methionine contacts are provided by residues 197–198 (GE), S229, 253–255 (SLH), and N329. C372 (S-methylcysteine intermediate) is an active-site residue.

It belongs to the radical SAM superfamily. RlmN family. Requires [4Fe-4S] cluster as cofactor.

It localises to the cytoplasm. The enzyme catalyses adenosine(2503) in 23S rRNA + 2 reduced [2Fe-2S]-[ferredoxin] + 2 S-adenosyl-L-methionine = 2-methyladenosine(2503) in 23S rRNA + 5'-deoxyadenosine + L-methionine + 2 oxidized [2Fe-2S]-[ferredoxin] + S-adenosyl-L-homocysteine. It catalyses the reaction adenosine(37) in tRNA + 2 reduced [2Fe-2S]-[ferredoxin] + 2 S-adenosyl-L-methionine = 2-methyladenosine(37) in tRNA + 5'-deoxyadenosine + L-methionine + 2 oxidized [2Fe-2S]-[ferredoxin] + S-adenosyl-L-homocysteine. Functionally, specifically methylates position 2 of adenine 2503 in 23S rRNA and position 2 of adenine 37 in tRNAs. m2A2503 modification seems to play a crucial role in the proofreading step occurring at the peptidyl transferase center and thus would serve to optimize ribosomal fidelity. In Sorangium cellulosum (strain So ce56) (Polyangium cellulosum (strain So ce56)), this protein is Dual-specificity RNA methyltransferase RlmN.